The sequence spans 264 residues: Ribosomal protein L11 methyltransferase (264 aa).

Residues threonine 116, glycine 137, aspartate 159, and asparagine 200 each contribute to the S-adenosyl-L-methionine site.

It belongs to the methyltransferase superfamily. PrmA family.

It localises to the cytoplasm. It catalyses the reaction L-lysyl-[protein] + 3 S-adenosyl-L-methionine = N(6),N(6),N(6)-trimethyl-L-lysyl-[protein] + 3 S-adenosyl-L-homocysteine + 3 H(+). Functionally, methylates ribosomal protein L11. The polypeptide is Ribosomal protein L11 methyltransferase (Thermotoga maritima (strain ATCC 43589 / DSM 3109 / JCM 10099 / NBRC 100826 / MSB8)).